The sequence spans 513 residues: rRNA N(6)-adenosine-methyltransferase ZCCHC4 (513 aa).

Zn(2+)-binding residues include cysteine 40, histidine 42, cysteine 64, cysteine 73, cysteine 125, cysteine 128, histidine 140, and histidine 143. The GRF-type zinc-finger motif lies at cysteine 40–lysine 82. S-adenosyl-L-methionine is bound by residues glutamine 172–phenylalanine 175, arginine 202, aspartate 225, asparagine 243–methionine 244, and aspartate 276. Positions glutamine 337 to proline 357 are regulatory loop. The Zn(2+) site is built by cysteine 380, cysteine 383, histidine 393, cysteine 394, cysteine 397, cysteine 400, histidine 410, cysteine 411, cysteine 414, cysteine 417, histidine 424, cysteine 425, cysteine 428, cysteine 431, histidine 436, and cysteine 438. The DHHC domain maps to glutamate 395–isoleucine 447. A CCHC-type zinc finger spans residues histidine 443 to asparagine 460. Residues arginine 466–lysine 481 show a composition bias toward basic residues. Residues arginine 466–serine 513 are disordered. The segment covering threonine 487 to serine 496 has biased composition (polar residues). Positions alanine 497–arginine 506 are enriched in basic residues.

Belongs to the ZCCHC4 family. In terms of assembly, interacts with components of the ASC-1 complex TRIP4, ASCC1, ASCC2 and ASCC3. Interact with AHCYL1 and AHCYL2. Interact with YTHDC2.

Its subcellular location is the nucleus. It localises to the nucleolus. The protein resides in the cytoplasm. It carries out the reaction adenosine(4220) in 28S rRNA + S-adenosyl-L-methionine = N(6)-methyladenosine(4220) in 28S rRNA + S-adenosyl-L-homocysteine + H(+). RRNA N6-methyltransferase that specifically methylates the adenine in position 4220 of 28S rRNA. N6-methylation of adenine(4220) in 28S rRNA is required for translation. This is rRNA N(6)-adenosine-methyltransferase ZCCHC4 from Homo sapiens (Human).